Here is a 319-residue protein sequence, read N- to C-terminus: Cytochrome f (319 aa).

A signal peptide spans 1–35; the sequence is MQNKDACKSLSSWVSLSISLLVLTVPLIWPYNSTA. The heme site is built by Phe-36, Cys-56, Cys-59, and His-60. A helical transmembrane segment spans residues 285–305; it reads IQGLLVFFASVILAQIFLVLK.

Belongs to the cytochrome f family. In terms of assembly, the 4 large subunits of the cytochrome b6-f complex are cytochrome b6, subunit IV (17 kDa polypeptide, petD), cytochrome f and the Rieske protein, while the 4 small subunits are PetG, PetL, PetM and PetN. The complex functions as a dimer. Requires heme as cofactor.

The protein localises to the plastid. Its subcellular location is the chloroplast thylakoid membrane. In terms of biological role, component of the cytochrome b6-f complex, which mediates electron transfer between photosystem II (PSII) and photosystem I (PSI), cyclic electron flow around PSI, and state transitions. The sequence is that of Cytochrome f from Staurastrum punctulatum (Green alga).